The primary structure comprises 57 residues: Small ribosomal subunit protein bS21 (57 aa).

A disordered region spans residues 34-57; it reads RKEHYIKPSVQKKNRQKNMRSKKR. Over residues 43–57 the composition is skewed to basic residues; that stretch reads VQKKNRQKNMRSKKR.

It belongs to the bacterial ribosomal protein bS21 family.

The chain is Small ribosomal subunit protein bS21 from Aster yellows witches'-broom phytoplasma (strain AYWB).